Here is a 961-residue protein sequence, read N- to C-terminus: Leucine-rich repeat-containing protein egg-6 (961 aa).

Residues 1-18 form the signal peptide; the sequence is MRWLTLIAVAHLIAFLSS. The Extracellular portion of the chain corresponds to 19–854; it reads AEITCPRIPE…EQNERHRNIR (836 aa). LRR repeat units follow at residues 60–78, 79–101, 103–124, 125–148, 150–172, 174–197, 199–222, 223–245, 247–269, 270–294, 305–316, 317–339, 340–363, 364–387, 388–411, 413–435, and 437–455; these read IDEL…SLPF, NGLR…AWRH, EATI…VFGN, LSTL…AFNG, SALT…SLDA, KASL…ILRN, ANLM…LMNL, PFLR…AFMN, PQLQ…RLQG, FKNL…DLPN, ITKIETLAFSNN, PNLQ…SFES, LDKL…MFDG, MKNL…SFAQ, LAHL…TFDK, SKLF…VFKK, and ISNI…SFNE. A helical transmembrane segment spans residues 855–875; the sequence is IITAIALAFVGAVTVVVIIFF. Residues 876 to 961 lie on the Cytoplasmic side of the membrane; it reads VNYTKKQRRL…PQAVSHRSRH (86 aa). Positions 890–943 are disordered; it reads VYRSSPSSSGSSGQNAANESGRSSAAPSPIRPPLMNIPKTPNNRTMESTFGQPQ. A compositionally biased stretch (low complexity) spans 893 to 902; the sequence is SSPSSSGSSG. Over residues 928–943 the composition is skewed to polar residues; sequence KTPNNRTMESTFGQPQ.

In terms of tissue distribution, in L1 larvae, expressed in a subset of epithelial cells including epidermal, vulval and rectal cells and the excretory duct and pore. Also detected in some neurons. Absent from internal epithelia such as the gut and pharyngeal tubes.

The protein resides in the apical cell membrane. Its function is as follows. Required for apical extracellular matrix organization and epithelial junction maintenance. The chain is Leucine-rich repeat-containing protein egg-6 from Caenorhabditis elegans.